The sequence spans 414 residues: Translation initiation factor 2 subunit gamma (414 aa).

Positions Gln-7–Asp-204 constitute a tr-type G domain. A G1 region spans residues Gly-16 to Thr-23. Mg(2+)-binding residues include Asp-19, Thr-23, Gly-44, and Ser-46. A GTP-binding site is contributed by Asp-19–Thr-24. Positions Gly-44 to Arg-48 are G2. The interval Asp-91 to Gly-94 is G3. Residues Asn-147–Asp-150 and Ser-182–Glu-184 each bind GTP. The G4 stretch occupies residues Asn-147–Asp-150. Positions Ser-182 to Glu-184 are G5.

It belongs to the TRAFAC class translation factor GTPase superfamily. Classic translation factor GTPase family. EIF2G subfamily. As to quaternary structure, heterotrimer composed of an alpha, a beta and a gamma chain. It depends on Mg(2+) as a cofactor.

It carries out the reaction GTP + H2O = GDP + phosphate + H(+). Its function is as follows. eIF-2 functions in the early steps of protein synthesis by forming a ternary complex with GTP and initiator tRNA. The sequence is that of Translation initiation factor 2 subunit gamma from Halobacterium salinarum (strain ATCC 29341 / DSM 671 / R1).